Consider the following 150-residue polypeptide: UPF0208 membrane protein VC_1099 (150 aa).

A run of 2 helical transmembrane segments spans residues 42-62 and 70-90; these read FAIK…MVFA and AIVV…WLGH.

Belongs to the UPF0208 family.

Its subcellular location is the cell inner membrane. This Vibrio cholerae serotype O1 (strain ATCC 39315 / El Tor Inaba N16961) protein is UPF0208 membrane protein VC_1099.